A 358-amino-acid polypeptide reads, in one-letter code: UPF0283 membrane protein PM0909 (358 aa).

Transmembrane regions (helical) follow at residues 62-82, 90-110, and 213-233; these read LALT…QWLV, WIYF…VSSL, and ALEA…MFFL.

It belongs to the UPF0283 family.

Its subcellular location is the cell inner membrane. The protein is UPF0283 membrane protein PM0909 of Pasteurella multocida (strain Pm70).